Reading from the N-terminus, the 180-residue chain is Ribulose bisphosphate carboxylase small subunit, chloroplastic (180 aa).

The transit peptide at 1–56 (MASSVLSSAAVATRSNVAQANMVAPFTGLKSAASFPVSRKQNLDITSIASNGGRVQ) directs the protein to the chloroplast.

Belongs to the RuBisCO small chain family. In terms of assembly, heterohexadecamer of 8 large and 8 small subunits. As to quaternary structure, (Microbial infection) Binds to tobamovirus movement protein at the plasmodesmata (e.g. tomato mosaic virus MP AC P69513); this interaction seems required for viral systemic movement.

The protein localises to the plastid. It localises to the chloroplast. It is found in the cell junction. The protein resides in the plasmodesma. Functionally, ruBisCO catalyzes two reactions: the carboxylation of D-ribulose 1,5-bisphosphate, the primary event in carbon dioxide fixation, as well as the oxidative fragmentation of the pentose substrate. Both reactions occur simultaneously and in competition at the same active site. Although the small subunit is not catalytic it is essential for maximal activity. Involved in antiviral defenses. In terms of biological role, (Microbial infection) Required for tobamovirus movement (e.g. tobacco mosaic virus (TMV)). The protein is Ribulose bisphosphate carboxylase small subunit, chloroplastic of Nicotiana benthamiana.